The chain runs to 426 residues: MRSYPAIPRIYAETTLNMLLKRAKKPRVHSIDEYLKDGGYQALEKALNMSPEEIIDWVDKSTLRGRGGAGFPTGKKWKFAVQNPGPRYFICNADESEPGTFKDRIIIERDPHLLIEGIIISSYAIGANEAYIYIRGEYPAGYYILRDAIEEAKKKGFLGKNILGSGFDLEIYVARGAGAYICGEETALIESLEGKRGHPRLKPPYPVQKGLWGKPTVVNNVETIANVPFIISMGWEEYRYIGPSDYAGPKLFPVSGKVKKPGVYELPMNTTLREVIFKYAGGTLGNKKVKAVFSGALDCFSSEELDIPMDYSPLGFGGTGTVIVLTEEDDIVEAALKIAEFYEHETCGQCTPCRVGCYEQANLLEKIYKGEATEQDWEGFDFVNRNIQPTSICGLGAVAGRLIRQTLEKFPEEWEKYRKKSASLPL.

65 to 74 (GRGGAGFPTG) is a binding site for NAD(+). An FMN-binding site is contributed by 176 to 223 (GAGAYICGEETALIESLEGKRGHPRLKPPYPVQKGLWGKPTVVNNVET). [4Fe-4S] cluster contacts are provided by Cys347, Cys350, Cys353, and Cys393.

The protein belongs to the complex I 51 kDa subunit family. FMN serves as cofactor. Requires [4Fe-4S] cluster as cofactor.

It catalyses the reaction a quinone + NADH + 5 H(+)(in) = a quinol + NAD(+) + 4 H(+)(out). NDH-1 shuttles electrons from NADH, via FMN and iron-sulfur (Fe-S) centers, to quinones in the respiratory chain. Couples the redox reaction to proton translocation (for every two electrons transferred, four hydrogen ions are translocated across the cytoplasmic membrane), and thus conserves the redox energy in a proton gradient. The sequence is that of NADH-quinone oxidoreductase subunit F (nuoF) from Aquifex aeolicus (strain VF5).